Consider the following 189-residue polypeptide: Probable nicotinate-nucleotide adenylyltransferase (189 aa).

The protein belongs to the NadD family.

It catalyses the reaction nicotinate beta-D-ribonucleotide + ATP + H(+) = deamido-NAD(+) + diphosphate. It functions in the pathway cofactor biosynthesis; NAD(+) biosynthesis; deamido-NAD(+) from nicotinate D-ribonucleotide: step 1/1. In terms of biological role, catalyzes the reversible adenylation of nicotinate mononucleotide (NaMN) to nicotinic acid adenine dinucleotide (NaAD). The polypeptide is Probable nicotinate-nucleotide adenylyltransferase (Ruegeria sp. (strain TM1040) (Silicibacter sp.)).